Here is an 83-residue protein sequence, read N- to C-terminus: UPF0248 protein PYRAB10580 (83 aa).

It belongs to the UPF0248 family.

This is UPF0248 protein PYRAB10580 from Pyrococcus abyssi (strain GE5 / Orsay).